We begin with the raw amino-acid sequence, 397 residues long: 2-oxoglutarate and iron-dependent oxygenase domain-containing protein ICU11 (397 aa).

A disordered region spans residues 1–56; the sequence is MCNQTPLRSMALDSSGKQPEQQQQQQPRASSGNGEARLKLRRTPNEEHEPENYEDL. The span at 18-27 shows a compositional bias: low complexity; the sequence is QPEQQQQQQP. The 102-residue stretch at 238–339 folds into the Fe2OG dioxygenase domain; sequence SLDSHHGYIV…RANLILWCRS (102 aa). Residues His260, Asp262, and His320 each coordinate Fe cation. Arg330 is a binding site for 2-oxoglutarate.

Fe(2+) serves as cofactor. Requires L-ascorbate as cofactor. As to expression, expressed in roots, cotyledons, rosette leaves, cauline leaves and inflorescences.

It localises to the nucleus. Its subcellular location is the nucleoplasm. Functionally, participates in the epigenetic repression of flowering genes in association with CP2. Functions in the repression of several members of the MADS-box transcription factors family, including SEP3, during vegetative development via histone modification. The sequence is that of 2-oxoglutarate and iron-dependent oxygenase domain-containing protein ICU11 from Arabidopsis thaliana (Mouse-ear cress).